The primary structure comprises 533 residues: Beta-glucosidase 22 (533 aa).

The N-terminal stretch at 1 to 24 is a signal peptide; sequence MAVSSSTSTCSSFSLLLLLLLLAA. Residue Asn-41 is glycosylated (N-linked (GlcNAc...) asparagine). Residues Gln-61, His-161, and 206–207 each bind a beta-D-glucoside; that span reads DE. Glu-207 functions as the Proton donor in the catalytic mechanism. A disulfide bridge connects residues Cys-226 and Cys-234. Residues Asn-233 and Asn-238 are each glycosylated (N-linked (GlcNAc...) asparagine). A beta-D-glucoside-binding residues include Tyr-350 and Glu-421. The active-site Nucleophile is the Glu-421. Residue Asn-435 is glycosylated (N-linked (GlcNAc...) asparagine). A beta-D-glucoside contacts are provided by Trp-466 and Phe-482.

This sequence belongs to the glycosyl hydrolase 1 family.

The catalysed reaction is Hydrolysis of terminal, non-reducing beta-D-glucosyl residues with release of beta-D-glucose.. The protein is Beta-glucosidase 22 (BGLU22) of Oryza sativa subsp. japonica (Rice).